We begin with the raw amino-acid sequence, 311 residues long: Giardin subunit alpha-8 (311 aa).

Annexin repeat units follow at residues 5 to 73, 75 to 146, 154 to 223, and 227 to 295; these read RKAY…IRCW, NRHE…DRWM, NNVK…AAHY, and EPSK…SLWR.

Belongs to the annexin family. Giardin subunit alpha subfamily.

Its subcellular location is the cytoplasm. The protein resides in the cytoskeleton. Functionally, giardins are involved in parasite attachment to the intestinal mucosa and in the cytoskeletal disassembly and reassembly that marks the transition from infectious trophozoite to transmissible cyst. They may interact with other cytoskeletal proteins such as microtubules in the microribbons or crossbridges, to maintain the integrity of the ventral disk. This chain is Giardin subunit alpha-8, found in Giardia intestinalis (Giardia lamblia).